A 342-amino-acid chain; its full sequence is Cell division protein ZipA (342 aa).

Topologically, residues 1-6 (MEDLQL) are periplasmic. A helical membrane pass occupies residues 7–27 (VLFILGAIAIVAVLVHGFWSI). Residues 28–342 (RRQQPKSLKD…DYLHRIRANA (315 aa)) lie on the Cytoplasmic side of the membrane. Residues 33-57 (KSLKDSPMGNFYKQQADKESPPKRV) form a disordered region. The span at 47 to 57 (QADKESPPKRV) shows a compositional bias: basic and acidic residues.

The protein belongs to the ZipA family. As to quaternary structure, interacts with FtsZ via their C-terminal domains.

It localises to the cell inner membrane. Essential cell division protein that stabilizes the FtsZ protofilaments by cross-linking them and that serves as a cytoplasmic membrane anchor for the Z ring. Also required for the recruitment to the septal ring of downstream cell division proteins. In Shewanella putrefaciens (strain CN-32 / ATCC BAA-453), this protein is Cell division protein ZipA.